Consider the following 297-residue polypeptide: Protoheme IX farnesyltransferase (297 aa).

The next 9 membrane-spanning stretches (helical) occupy residues valine 26–valine 46, tyrosine 48–valine 68, leucine 96–phenylalanine 116, leucine 120–leucine 140, asparagine 147–threonine 167, alanine 174–leucine 194, leucine 218–tyrosine 238, tyrosine 245–isoleucine 265, and phenylalanine 276–phenylalanine 296.

The protein belongs to the UbiA prenyltransferase family. Protoheme IX farnesyltransferase subfamily.

The protein resides in the cell inner membrane. The catalysed reaction is heme b + (2E,6E)-farnesyl diphosphate + H2O = Fe(II)-heme o + diphosphate. The protein operates within porphyrin-containing compound metabolism; heme O biosynthesis; heme O from protoheme: step 1/1. Functionally, converts heme B (protoheme IX) to heme O by substitution of the vinyl group on carbon 2 of heme B porphyrin ring with a hydroxyethyl farnesyl side group. This chain is Protoheme IX farnesyltransferase, found in Polynucleobacter necessarius subsp. necessarius (strain STIR1).